Consider the following 879-residue polypeptide: Alanine--tRNA ligase (879 aa).

Residues His566, His570, Cys668, and His672 each coordinate Zn(2+).

Belongs to the class-II aminoacyl-tRNA synthetase family. The cofactor is Zn(2+).

It is found in the cytoplasm. It catalyses the reaction tRNA(Ala) + L-alanine + ATP = L-alanyl-tRNA(Ala) + AMP + diphosphate. In terms of biological role, catalyzes the attachment of alanine to tRNA(Ala) in a two-step reaction: alanine is first activated by ATP to form Ala-AMP and then transferred to the acceptor end of tRNA(Ala). Also edits incorrectly charged Ser-tRNA(Ala) and Gly-tRNA(Ala) via its editing domain. This Listeria innocua serovar 6a (strain ATCC BAA-680 / CLIP 11262) protein is Alanine--tRNA ligase.